Reading from the N-terminus, the 88-residue chain is MANNPSQLLPSELIDRCIGSKIWVIMKGDKELVGILKGFDVYVNMVLEDVTEYEITAEGRRVTKLDQILLNGNNIAILVPGGSPEDGE.

Ala2 carries the N-acetylalanine modification. Residues 9–84 (LPSELIDRCI…IAILVPGGSP (76 aa)) enclose the Sm domain.

It belongs to the snRNP Sm proteins family. Component of the heptameric LSM1-LSM7 complex that forms a seven-membered ring structure with a donut shape. The LSM subunits are arranged in the order LSM1, LSM2, LSM3, LSM6, LSM5, LSM7 and LSM4. Component of the heptameric LSM2-LSM8 complex that forms a seven-membered ring structure with a donut shape. The LSM subunits are arranged in the order LSM8, LSM2, LSM3, LSM6, LSM5, LSM7 and LSM4. LSM2 subunit interacts only with its two neighboring subunits, LSM6A or LSM6B and LSM7. In terms of tissue distribution, expressed in roots, leaves, stems, flowers and siliques.

It localises to the cytoplasm. The protein resides in the nucleus. Component of LSM protein complexes, which are involved in RNA processing. Component of the cytoplasmic LSM1-LSM7 complex which is involved in mRNA degradation by promoting decapping and leading to accurate 5'-3' mRNA decay. The cytoplasmic LSM1-LSM7 complex regulates developmental gene expression by the decapping of specific development-related transcripts. Component of the nuclear LSM2-LSM8 complex which is involved splicing nuclear mRNAs. LSM2-LSM8 binds directly to the U6 small nuclear RNAs (snRNAs) and is essential for accurate splicing of selected development-related mRNAs through the stabilization of the spliceosomal U6 snRNA. Plays a critical role in the regulation of development-related gene expression. Involved in the control of plant sensitivity to abscisic acid (ABA) and drought. Functions with ABH1 as negative regulator of ABA signaling in guard cells. Required for regulation of splicing efficiency of many stress-responsive genes under stress conditions. This Arabidopsis thaliana (Mouse-ear cress) protein is Sm-like protein LSM5.